Consider the following 133-residue polypeptide: Putative dispanin subfamily A member 2d (133 aa).

Residues 1–57 (MNHTVQTFFSPVNSGQPPNYEMLKEEHKVAVLGVPHNPAPPTSTVIHIRSKTSVPHH) are Extracellular-facing. K24 participates in a covalent cross-link: Glycyl lysine isopeptide (Lys-Gly) (interchain with G-Cter in ubiquitin). The chain crosses the membrane as a helical span at residues 58–78 (VVWSLFNTLFMNPCCLGFIAF). The Cytoplasmic segment spans residues 79-107 (AYSVKSRDRKMVGNVTGAQAYASTTKCLN). Glycyl lysine isopeptide (Lys-Gly) (interchain with G-Cter in ubiquitin) cross-links involve residues K83, K88, and K104. Residues 108–128 (IWALILGILMTILLIIIPVLI) form a helical membrane-spanning segment. Over 129–133 (FQAHR) the chain is Extracellular.

The protein belongs to the CD225/Dispanin family.

It is found in the membrane. The protein is Putative dispanin subfamily A member 2d of Homo sapiens (Human).